The primary structure comprises 660 residues: Protein NEDD1 (660 aa).

WD repeat units follow at residues 1–31 (MQEN…FNPH), 32–71 (TSPH…PVPL), 75–114 (AEGQ…VHRS), 117–156 (DHKD…SSTP), 160–200 (GSNQ…PYHN), 204–244 (VHKA…LVKT), 246–285 (VADT…SPVK), and 289–332 (AHKT…NAAS). S325 bears the Phosphoserine mark. A disordered region spans residues 369-411 (QEKAGLPRSINTDTLSKETDSGKNQDFSSFDDTGKSSLGDMFS). T382 bears the Phosphothreonine; by PLK1 mark. Phosphoserine; by PLK1 is present on S397. The residue at position 411 (S411) is a Phosphoserine. Phosphoserine; by PLK1 is present on S426. S468 and S516 each carry phosphoserine. The span at 507–523 (GAESGNLNTSPSSNQTR) shows a compositional bias: polar residues. The segment at 507 to 532 (GAESGNLNTSPSSNQTRNSEKFEKPE) is disordered. Position 550 is a phosphothreonine; by CDK1 (T550). S637 carries the post-translational modification Phosphoserine; by PLK1.

In terms of assembly, interacts with FAM29A. Interacts with HSPA1A and HSPA1B. Interacts with gamma-tubulin in a HSPA1A/B-dependent manner. During mitosis, prior phosphorylation on Thr-550 by CDK1 promotes subsequent phosphorylation by PLK1 on Thr-382, Ser-397, Ser-426 and Ser-637. Phosphorylated NEDD1 can interact with gamma-tubulin for targeting the gamma-tubulin ring complex (gTuRC) to the centrosome, an important step for spindle formation.

It localises to the cytoplasm. The protein localises to the cytoskeleton. The protein resides in the microtubule organizing center. It is found in the centrosome. Required for mitosis progression. Promotes the nucleation of microtubules from the spindle. This Homo sapiens (Human) protein is Protein NEDD1 (NEDD1).